A 263-amino-acid chain; its full sequence is 4-hydroxy-2-oxo-heptane-1,7-dioate aldolase (263 aa).

H45 serves as the catalytic Proton acceptor. Substrate is bound at residue Q147. E149 is an a divalent metal cation binding site. Residues A174 and D175 each contribute to the substrate site. D175 contacts a divalent metal cation.

This sequence belongs to the HpcH/HpaI aldolase family. As to quaternary structure, homohexamer; trimer of dimers. A divalent metal cation serves as cofactor.

It catalyses the reaction 4-hydroxy-2-oxoheptanedioate = succinate semialdehyde + pyruvate. It functions in the pathway aromatic compound metabolism; 4-hydroxyphenylacetate degradation; pyruvate and succinate semialdehyde from 4-hydroxyphenylacetate: step 7/7. Catalyzes the reversible retro-aldol cleavage of 4-hydroxy-2-ketoheptane-1,7-dioate (HKHD) to pyruvate and succinic semialdehyde. This chain is 4-hydroxy-2-oxo-heptane-1,7-dioate aldolase, found in Salmonella choleraesuis (strain SC-B67).